Consider the following 432-residue polypeptide: Adenylosuccinate synthetase (432 aa).

GTP-binding positions include 12-18 and 40-42; these read GDEGKGK and GHT. Catalysis depends on Asp-13, which acts as the Proton acceptor. The Mg(2+) site is built by Asp-13 and Gly-40. IMP-binding positions include 13–16, 38–41, Thr-130, Arg-144, Gln-225, Thr-240, and Arg-304; these read DEGK and NAGH. His-41 (proton donor) is an active-site residue. 300 to 306 contributes to the substrate binding site; the sequence is STTGRPR. GTP-binding positions include Arg-306, 332–334, and 414–416; these read KLD and SVG.

The protein belongs to the adenylosuccinate synthetase family. Homodimer. It depends on Mg(2+) as a cofactor.

It is found in the cytoplasm. It catalyses the reaction IMP + L-aspartate + GTP = N(6)-(1,2-dicarboxyethyl)-AMP + GDP + phosphate + 2 H(+). The protein operates within purine metabolism; AMP biosynthesis via de novo pathway; AMP from IMP: step 1/2. Functionally, plays an important role in the de novo pathway of purine nucleotide biosynthesis. Catalyzes the first committed step in the biosynthesis of AMP from IMP. This Citrifermentans bemidjiense (strain ATCC BAA-1014 / DSM 16622 / JCM 12645 / Bem) (Geobacter bemidjiensis) protein is Adenylosuccinate synthetase.